Consider the following 316-residue polypeptide: Pantothenate kinase (316 aa).

ATP is bound at residue 95–102 (GSVAVGKS).

The protein belongs to the prokaryotic pantothenate kinase family.

It is found in the cytoplasm. The catalysed reaction is (R)-pantothenate + ATP = (R)-4'-phosphopantothenate + ADP + H(+). It functions in the pathway cofactor biosynthesis; coenzyme A biosynthesis; CoA from (R)-pantothenate: step 1/5. This chain is Pantothenate kinase (coaA), found in Halalkalibacterium halodurans (strain ATCC BAA-125 / DSM 18197 / FERM 7344 / JCM 9153 / C-125) (Bacillus halodurans).